The chain runs to 496 residues: NADH-quinone oxidoreductase subunit N (496 aa).

13 consecutive transmembrane segments (helical) span residues 16–36, 46–66, 79–99, 116–136, 166–186, 208–228, 245–267, 278–298, 304–324, 331–351, 382–402, 422–442, and 464–484; these read SLSP…VGAI, CVFC…FNGL, ISII…PLAL, FLFM…LIIF, FAMG…FYLA, LIIL…LSLI, LAGY…IFAM, DMLY…ALVQ, MLAF…VANS, LFFY…MLWV, AVIM…SVFW, IIMI…VFMF, and VIVG…GAIL.

It belongs to the complex I subunit 2 family. As to quaternary structure, NDH-1 is composed of 14 different subunits. Subunits NuoA, H, J, K, L, M, N constitute the membrane sector of the complex.

The protein localises to the cell inner membrane. The catalysed reaction is a quinone + NADH + 5 H(+)(in) = a quinol + NAD(+) + 4 H(+)(out). Functionally, NDH-1 shuttles electrons from NADH, via FMN and iron-sulfur (Fe-S) centers, to quinones in the respiratory chain. The immediate electron acceptor for the enzyme in this species is believed to be ubiquinone. Couples the redox reaction to proton translocation (for every two electrons transferred, four hydrogen ions are translocated across the cytoplasmic membrane), and thus conserves the redox energy in a proton gradient. In Campylobacter concisus (strain 13826), this protein is NADH-quinone oxidoreductase subunit N.